The sequence spans 98 residues: Large ribosomal subunit protein mL53 (98 aa).

Belongs to the mitochondrion-specific ribosomal protein mL53 family. In terms of assembly, component of the mitochondrial large ribosomal subunit (mt-LSU). Mature N.crassa 74S mitochondrial ribosomes consist of a small (37S) and a large (54S) subunit. The 37S small subunit contains a 16S ribosomal RNA (16S mt-rRNA) and 32 different proteins. The 54S large subunit contains a 23S rRNA (23S mt-rRNA) and 42 different proteins.

It localises to the mitochondrion. Its function is as follows. Component of the mitochondrial ribosome (mitoribosome), a dedicated translation machinery responsible for the synthesis of mitochondrial genome-encoded proteins, including at least some of the essential transmembrane subunits of the mitochondrial respiratory chain. The mitoribosomes are attached to the mitochondrial inner membrane and translation products are cotranslationally integrated into the membrane. The protein is Large ribosomal subunit protein mL53 (mrpl44) of Neurospora crassa (strain ATCC 24698 / 74-OR23-1A / CBS 708.71 / DSM 1257 / FGSC 987).